A 291-amino-acid chain; its full sequence is 4-hydroxy-tetrahydrodipicolinate synthase (291 aa).

Residue Thr-45 coordinates pyruvate. Tyr-131 acts as the Proton donor/acceptor in catalysis. Lys-159 functions as the Schiff-base intermediate with substrate in the catalytic mechanism. Ile-202 provides a ligand contact to pyruvate.

Belongs to the DapA family. As to quaternary structure, homotetramer; dimer of dimers.

Its subcellular location is the cytoplasm. The enzyme catalyses L-aspartate 4-semialdehyde + pyruvate = (2S,4S)-4-hydroxy-2,3,4,5-tetrahydrodipicolinate + H2O + H(+). It functions in the pathway amino-acid biosynthesis; L-lysine biosynthesis via DAP pathway; (S)-tetrahydrodipicolinate from L-aspartate: step 3/4. Its function is as follows. Catalyzes the condensation of (S)-aspartate-beta-semialdehyde [(S)-ASA] and pyruvate to 4-hydroxy-tetrahydrodipicolinate (HTPA). This Methanosarcina barkeri (strain Fusaro / DSM 804) protein is 4-hydroxy-tetrahydrodipicolinate synthase.